Consider the following 259-residue polypeptide: Proteasome subunit alpha (259 aa).

This sequence belongs to the peptidase T1A family. The 20S proteasome core is composed of 14 alpha and 14 beta subunits that assemble into four stacked heptameric rings, resulting in a barrel-shaped structure. The two inner rings, each composed of seven catalytic beta subunits, are sandwiched by two outer rings, each composed of seven alpha subunits. The catalytic chamber with the active sites is on the inside of the barrel. Has a gated structure, the ends of the cylinder being occluded by the N-termini of the alpha-subunits. Is capped at one or both ends by the proteasome regulatory ATPase, PAN.

The protein resides in the cytoplasm. The formation of the proteasomal ATPase PAN-20S proteasome complex, via the docking of the C-termini of PAN into the intersubunit pockets in the alpha-rings, triggers opening of the gate for substrate entry. Interconversion between the open-gate and close-gate conformations leads to a dynamic regulation of the 20S proteasome proteolysis activity. In terms of biological role, component of the proteasome core, a large protease complex with broad specificity involved in protein degradation. The polypeptide is Proteasome subunit alpha (Methanococcus maripaludis (strain DSM 14266 / JCM 13030 / NBRC 101832 / S2 / LL)).